The primary structure comprises 318 residues: MALKELRIGTRASQLALWQANWVKSELEKRYPDMTVTLTKIKTIGDKILDVPLAQVGGKGLFVKEIEEAMLRGEIDIAVHSMKDVPTEFPEGLGLYCITEREDPRDAVISNNVKFADLPQGARIGTSALRRQAQLLKVRPDLEMVIIRGNVQTRMDKLKTEGLDAVILAAAGLNRLGFADQITELLPTDLSLPAIGQGALGIECNLSNQDVKDAISFFNHPDTSRAVRAERALLWRCEGGCQVPIAAFGEVTGDELKLTGFIASVDGKVSVKGVVTGPADDCEKLGVKLAEQLLSEGGHAILAEVYQREVSREKEIPV.

The residue at position 241 (Cys-241) is an S-(dipyrrolylmethanemethyl)cysteine.

The protein belongs to the HMBS family. Monomer. Dipyrromethane serves as cofactor.

The enzyme catalyses 4 porphobilinogen + H2O = hydroxymethylbilane + 4 NH4(+). The protein operates within porphyrin-containing compound metabolism; protoporphyrin-IX biosynthesis; coproporphyrinogen-III from 5-aminolevulinate: step 2/4. Its function is as follows. Tetrapolymerization of the monopyrrole PBG into the hydroxymethylbilane pre-uroporphyrinogen in several discrete steps. The polypeptide is Porphobilinogen deaminase (Geobacter sp. (strain M21)).